The primary structure comprises 122 residues: Large ribosomal subunit protein uL14c (122 aa).

This sequence belongs to the universal ribosomal protein uL14 family. As to quaternary structure, part of the 50S ribosomal subunit.

It is found in the plastid. The protein localises to the chloroplast. In terms of biological role, binds to 23S rRNA. This chain is Large ribosomal subunit protein uL14c, found in Mesostigma viride (Green alga).